The primary structure comprises 264 residues: S-adenosylmethionine decarboxylase proenzyme (264 aa).

S113 acts as the Schiff-base intermediate with substrate; via pyruvic acid in catalysis. S113 bears the Pyruvic acid (Ser); by autocatalysis mark. H118 acts as the Proton acceptor; for processing activity in catalysis. C141 acts as the Proton donor; for catalytic activity in catalysis.

This sequence belongs to the prokaryotic AdoMetDC family. Type 2 subfamily. As to quaternary structure, heterooctamer of four alpha and four beta chains arranged as a tetramer of alpha/beta heterodimers. It depends on pyruvate as a cofactor. Is synthesized initially as an inactive proenzyme. Formation of the active enzyme involves a self-maturation process in which the active site pyruvoyl group is generated from an internal serine residue via an autocatalytic post-translational modification. Two non-identical subunits are generated from the proenzyme in this reaction, and the pyruvate is formed at the N-terminus of the alpha chain, which is derived from the carboxyl end of the proenzyme. The post-translation cleavage follows an unusual pathway, termed non-hydrolytic serinolysis, in which the side chain hydroxyl group of the serine supplies its oxygen atom to form the C-terminus of the beta chain, while the remainder of the serine residue undergoes an oxidative deamination to produce ammonia and the pyruvoyl group blocking the N-terminus of the alpha chain.

The catalysed reaction is S-adenosyl-L-methionine + H(+) = S-adenosyl 3-(methylsulfanyl)propylamine + CO2. Its pathway is amine and polyamine biosynthesis; S-adenosylmethioninamine biosynthesis; S-adenosylmethioninamine from S-adenosyl-L-methionine: step 1/1. Its function is as follows. Catalyzes the decarboxylation of S-adenosylmethionine to S-adenosylmethioninamine (dcAdoMet), the propylamine donor required for the synthesis of the polyamines spermine and spermidine from the diamine putrescine. The chain is S-adenosylmethionine decarboxylase proenzyme from Xylella fastidiosa (strain Temecula1 / ATCC 700964).